We begin with the raw amino-acid sequence, 209 residues long: Ribonuclease HII (209 aa).

Residues 19–209 (CIIVGVDEVG…LPGITKLYSK (191 aa)) form the RNase H type-2 domain. The a divalent metal cation site is built by D25, E26, and D118.

The protein belongs to the RNase HII family. Mn(2+) is required as a cofactor. It depends on Mg(2+) as a cofactor.

It is found in the cytoplasm. The enzyme catalyses Endonucleolytic cleavage to 5'-phosphomonoester.. Endonuclease that specifically degrades the RNA of RNA-DNA hybrids. This chain is Ribonuclease HII, found in Ehrlichia canis (strain Jake).